The primary structure comprises 61 residues: Metallothionein-1 (61 aa).

At methionine 1 the chain carries N-acetylmethionine. Residues 1–29 (MDPNCSCSTGSTCTCSSSCGCKDCKCTSC) are beta. A divalent metal cation contacts are provided by cysteine 5, cysteine 7, cysteine 13, cysteine 15, cysteine 19, cysteine 21, cysteine 24, cysteine 26, cysteine 29, cysteine 33, cysteine 34, cysteine 36, cysteine 37, cysteine 41, cysteine 44, cysteine 48, cysteine 50, cysteine 57, cysteine 59, and cysteine 60. Residues 30 to 61 (KKSCCSCCPVGCSKCAQGCVCKGASDKCTCCA) form an alpha region.

The protein belongs to the metallothionein superfamily. Type 1 family.

Functionally, metallothioneins have a high content of cysteine residues that bind various heavy metals; these proteins are transcriptionally regulated by both heavy metals and glucocorticoids. This is Metallothionein-1 (MT1) from Cricetulus griseus (Chinese hamster).